The sequence spans 257 residues: Zinc transporter ZupT (257 aa).

Transmembrane regions (helical) follow at residues 5 to 25, 32 to 52, 61 to 81, 109 to 129, 137 to 157, 171 to 191, 195 to 215, and 236 to 256; these read LILT…GVIG, VLAF…LMEM, GMSP…YFAL, AILL…ATYV, LGFG…LAVA, ILWA…TWLI, MISP…MVAL, and GVLC…TAGF. The Fe(2+) site is built by Asn120 and Glu123. 2 residues coordinate Zn(2+): Glu123 and His148. Positions 149, 152, and 181 each coordinate Fe(2+). Glu152 is a binding site for Zn(2+).

Belongs to the ZIP transporter (TC 2.A.5) family. ZupT subfamily.

It localises to the cell inner membrane. The enzyme catalyses Zn(2+)(in) = Zn(2+)(out). Its function is as follows. Mediates zinc uptake. May also transport other divalent cations. This Enterobacter sp. (strain 638) protein is Zinc transporter ZupT.